Here is a 791-residue protein sequence, read N- to C-terminus: MEDMNSKIIEKLEYNRIIRQLSDLAITAPAKAQALKLMPSSDFDEVKKSIDQTRVLSNILRVKGPMPITDFKDVRPSLKRLKVKANLNGEELGNIFLVLSLAKDVGQFASDLEEREIDTRPIEKYLKNLAVPEDLFKKLNQAIEYDGTVKDTASSKLMQLRHDIQSNETDIKNHMNDYISGKHTQYLSENIVTIRDGRYVLPVKQEYKNKFGGVVHDQSASGQTLFVEPQAVLVLNNRQQNLLAQERQEIHRILIELSELAGAYQKEINNNALALTQLDFLSAKSKLAKKMKATEPVLNQDHIIKLRKARHPLIDPKKVVPNNIELGTTFDTMLITGPNTGGKTITLKTLGLLQLMAQAGLFITAEEGSQLTVFNEIYADIGDEQSIEQSLSTFSSHMDQIIKIMNNVTEDDLVLIDELGAGTDPEEGASLAIAILDDLRQTQAKIAITTHYPELKLYGYNRKRTTNASMEFDLKKLAPTYRLRIGIPGQSNAFAIAHQLGMNEAVVDKARDLMNDEDSDINKMIERLTEQTKAAEQLHETLKQNVDQSITLKRQLQNGLDWYNQQVQKQLEKSQEKADEMLAKKRKQAEKIINDLEEQRRAGGQVRTNKVIEAKGALNKLERENQNLANNKVLQREKKRHDVSVGDNVKVLSYGQQGVITKKLGEHEFEVQIGILKVKVTDRDVEKIAAQASQKKPEKSVRSSRGLRSSRASSELDLRGQRYEEALTNLDRYLDASLLAGLNTVTIIHGIGTGAIRNGVQQYLKRNRHVKSYNYAPANQGGTGATIVNLQ.

337–344 (GPNTGGKT) provides a ligand contact to ATP. The tract at residues 689–715 (AAQASQKKPEKSVRSSRGLRSSRASSE) is disordered. Residues 703-713 (SSRGLRSSRAS) show a composition bias toward low complexity. The region spanning 716-791 (LDLRGQRYEE…GTGATIVNLQ (76 aa)) is the Smr domain.

This sequence belongs to the DNA mismatch repair MutS family. MutS2 subfamily. Homodimer. Binds to stalled ribosomes, contacting rRNA.

Endonuclease that is involved in the suppression of homologous recombination and thus may have a key role in the control of bacterial genetic diversity. Its function is as follows. Acts as a ribosome collision sensor, splitting the ribosome into its 2 subunits. Detects stalled/collided 70S ribosomes which it binds and splits by an ATP-hydrolysis driven conformational change. Acts upstream of the ribosome quality control system (RQC), a ribosome-associated complex that mediates the extraction of incompletely synthesized nascent chains from stalled ribosomes and their subsequent degradation. Probably generates substrates for RQC. This chain is Endonuclease MutS2, found in Lactobacillus gasseri (strain ATCC 33323 / DSM 20243 / BCRC 14619 / CIP 102991 / JCM 1131 / KCTC 3163 / NCIMB 11718 / NCTC 13722 / AM63).